The chain runs to 503 residues: Transmembrane protein 184C (503 aa).

7 helical membrane-spanning segments follow: residues 17 to 37, 48 to 68, 83 to 103, 115 to 135, 212 to 232, 254 to 274, and 287 to 307; these read LLIL…IWEF, VWFI…CGIL, IIRI…ALKY, ECYE…YLTI, YLVI…LLFY, VVFV…VGVI, and AVAT…AAIA. Disordered stretches follow at residues 358–391 and 479–503; these read PKKK…SPVG and SPKP…STDS. The span at 373–388 shows a compositional bias: low complexity; it reads SSLLSASSQDSSKPSS. Residues 494-503 show a composition bias toward polar residues; it reads PEGSDSSTDS.

It belongs to the TMEM184 family.

It is found in the membrane. In terms of biological role, possible tumor suppressor which may play a role in cell growth. The polypeptide is Transmembrane protein 184C (Tmem184c) (Rattus norvegicus (Rat)).